The sequence spans 514 residues: ATP synthase subunit alpha (514 aa).

170-177 is an ATP binding site; the sequence is GDRQTGKT.

This sequence belongs to the ATPase alpha/beta chains family. In terms of assembly, F-type ATPases have 2 components, CF(1) - the catalytic core - and CF(0) - the membrane proton channel. CF(1) has five subunits: alpha(3), beta(3), gamma(1), delta(1), epsilon(1). CF(0) has three main subunits: a(1), b(2) and c(9-12). The alpha and beta chains form an alternating ring which encloses part of the gamma chain. CF(1) is attached to CF(0) by a central stalk formed by the gamma and epsilon chains, while a peripheral stalk is formed by the delta and b chains.

Its subcellular location is the cell inner membrane. The enzyme catalyses ATP + H2O + 4 H(+)(in) = ADP + phosphate + 5 H(+)(out). Its function is as follows. Produces ATP from ADP in the presence of a proton gradient across the membrane. The alpha chain is a regulatory subunit. The polypeptide is ATP synthase subunit alpha (Acidithiobacillus ferrooxidans (strain ATCC 23270 / DSM 14882 / CIP 104768 / NCIMB 8455) (Ferrobacillus ferrooxidans (strain ATCC 23270))).